The primary structure comprises 563 residues: Beta-catenin-like protein 1 (563 aa).

Residue M1 is modified to N-acetylmethionine. Positions 1–49 (MDVGELLSYQPNRGTKRPRDDEEEEQKMRRKQTGTRERGRYREEEMTVV) are disordered. The short motif at 16–33 (KRPRDDEEEEQKMRRKQT) is the Nuclear localization signal element. Basic and acidic residues predominate over residues 34–45 (GTRERGRYREEE). 2 HEAT repeats span residues 79–129 (ESSV…VVAT) and 134–176 (YHLL…TLHE). K91 is subject to N6-acetyllysine. Positions 130–140 (MPDLYHLLVEL) match the Nuclear export signal (NES) motif. ARM repeat units lie at residues 178–228 (EEGA…MAEF), 229–273 (RPEM…LQDN), 274–323 (DENR…CLML), 325–363 (SNRE…AMIG), and 364–417 (PEGT…LLRN). The residue at position 389 (S389) is a Phosphoserine. A coiled-coil region spans residues 476–540 (DTEEEFYLRR…HIIKEYAENI (65 aa)). At S545 the chain carries Phosphoserine.

In terms of assembly, component of the PRP19-CDC5L splicing complex composed of a core complex comprising a homotetramer of PRPF19, CDC5L, PLRG1 and BCAS2, and at least three less stably associated proteins CTNNBL1, CWC15 and HSPA8. Interacts directly with CWC15 and CDC5L in the complex. Interacts with AICDA; the interaction is important for the antibody diversification activity of AICDA. Interacts with PRPF31 (via its NLS). Interacts (via its N-terminal NLS) with KPNA1 and KPNA2. As to expression, widely expressed with highest levels in skeletal muscle, placenta, heart, spleen, testis and thyroid.

The protein resides in the nucleus. Its subcellular location is the cytoplasm. Component of the PRP19-CDC5L complex that forms an integral part of the spliceosome and is required for activating pre-mRNA splicing. Participates in AID/AICDA-mediated somatic hypermutation (SHM) and class-switch recombination (CSR), 2 processes resulting in the production of high-affinity, mutated isotype-switched antibodies. The polypeptide is Beta-catenin-like protein 1 (CTNNBL1) (Homo sapiens (Human)).